A 446-amino-acid chain; its full sequence is MNALKYFSNHLITTKKQKKINVEVTKNQDLLGPSKEVSNKYTSHSENDCVSEVDQQYDHSSSHLKESDQNQERKNSVPKKPKALRSILIEKIASILWALLLFLPYYLIIKPLMSLWFVFTFPLSVIERRVKHTDKRNRGSNASENELPVSSSNINDSSEKTNPKNCNLNTIPEAVEDDLNASDEIILQRDNVKGSLLRAQSVKSRPRSYSKSELSLSNHSSSNTVFGTKRMGRFLFPKKLIPKSVLNTQKKKKLVIDLDETLIHSASRSTTHSNSSQGHLVEVKFGLSGIRTLYFIHKRPYCDLFLTKVSKWYDLIIFTASMKEYADPVIDWLESSFPSSFSKRYYRSDCVLRDGVGYIKDLSIVKDSEENGKGSSSSLDDVIIIDNSPVSYAMNVDNAIQVEGWISDPTDTDLLNLLPFLEAMRYSTDVRNILALKHGEKAFNIN.

The segment at 53–80 (VDQQYDHSSSHLKESDQNQERKNSVPKK) is disordered. The span at 56–75 (QYDHSSSHLKESDQNQERKN) shows a compositional bias: basic and acidic residues. Residues 87 to 103 (ILIEKIASILWALLLFL) form a helical membrane-spanning segment. Positions 132-168 (HTDKRNRGSNASENELPVSSSNINDSSEKTNPKNCNL) are disordered. Residues 139-156 (GSNASENELPVSSSNIND) show a composition bias toward polar residues. One can recognise an FCP1 homology domain in the interval 247–424 (NTQKKKKLVI…LNLLPFLEAM (178 aa)).

The protein belongs to the Dullard family. In terms of assembly, component of the NEM1-SPO7 complex.

The protein localises to the endoplasmic reticulum membrane. It localises to the nucleus membrane. It catalyses the reaction O-phospho-L-seryl-[protein] + H2O = L-seryl-[protein] + phosphate. The enzyme catalyses O-phospho-L-threonyl-[protein] + H2O = L-threonyl-[protein] + phosphate. Catalytic component of the NEM1-SPO7 complex which acts as a phosphatase and dephosphorylates the phosphatidic acid phosphohydrolase PAH1. Essential for the formation of a spherical nucleus and meiotic division. The NEM1-SPOo7 protein phosphatase is required for efficient mitophagy under prolonged respiration, as well as for reticulophagy and pexophagy. This Saccharomyces cerevisiae (strain ATCC 204508 / S288c) (Baker's yeast) protein is Nuclear envelope morphology protein 1 (NEM1).